The chain runs to 251 residues: Small ribosomal subunit protein uS2 (251 aa).

Belongs to the universal ribosomal protein uS2 family.

The polypeptide is Small ribosomal subunit protein uS2 (Nitrosomonas eutropha (strain DSM 101675 / C91 / Nm57)).